Reading from the N-terminus, the 165-residue chain is Methylated-DNA--protein-cysteine methyltransferase, constitutive (165 aa).

The active-site Nucleophile; methyl group acceptor is Cys-130.

The protein belongs to the MGMT family.

The protein resides in the cytoplasm. The catalysed reaction is a 6-O-methyl-2'-deoxyguanosine in DNA + L-cysteinyl-[protein] = S-methyl-L-cysteinyl-[protein] + a 2'-deoxyguanosine in DNA. The enzyme catalyses a 4-O-methyl-thymidine in DNA + L-cysteinyl-[protein] = a thymidine in DNA + S-methyl-L-cysteinyl-[protein]. Its function is as follows. Involved in the cellular defense against the biological effects of O6-methylguanine (O6-MeG) and O4-methylthymine (O4-MeT) in DNA. Repairs the methylated nucleobase in DNA by stoichiometrically transferring the methyl group to a cysteine residue in the enzyme. This is a suicide reaction: the enzyme is irreversibly inactivated. The sequence is that of Methylated-DNA--protein-cysteine methyltransferase, constitutive from Bacillus subtilis (strain 168).